Consider the following 564-residue polypeptide: Dihydropyrimidinase-related protein 5 (564 aa).

2 positions are modified to phosphothreonine: Thr509 and Thr514. 2 positions are modified to phosphoserine: Ser532 and Ser538. Arg559 carries the post-translational modification Omega-N-methylarginine.

Belongs to the metallo-dependent hydrolases superfamily. Hydantoinase/dihydropyrimidinase family. In terms of assembly, homotetramer, and heterotetramer with other DPYS-like proteins. Interacts with DPYSL2, DPYSL3 and DPYSL4. Interacts with SEPTIN4 isoform 4. Interacts with MAP2 and TUBB3. In terms of tissue distribution, detected in brain.

Its subcellular location is the cytoplasm. Its function is as follows. Involved in the negative regulation of dendrite outgrowth. This Mus musculus (Mouse) protein is Dihydropyrimidinase-related protein 5 (Dpysl5).